We begin with the raw amino-acid sequence, 42 residues long: Snaclec lebecetin subunit alpha (42 aa).

The region spanning 1-42 (DQDCLPGWSSHEGHCYKVFNLDKTWEDAEKFCTEQPSNGHLV) is the C-type lectin domain. Residues Cys4 and Cys15 are joined by a disulfide bond.

As to quaternary structure, heterodimer of subunits alpha and beta; disulfide-linked. Ca(2+) serves as cofactor. Glycosylated. Expressed by the venom gland.

It is found in the secreted. Its function is as follows. Binds to the platelet GPIb/IX/V receptor system and inhibits ristocetin-induced platelet aggregation in human platelet-rich plasma. Strongly inhibits platelet aggregation induced by ADP, calcium ionophore, thrombin and collagen. Does not inhibit U46619-induced platelet aggregation. This chain is Snaclec lebecetin subunit alpha, found in Macrovipera lebetinus (Levantine viper).